The chain runs to 109 residues: MFNRPNRNDVDDGVQDIQNDVNQLADSLESVLKSWGSDAKGEAEAARSKAQALLKETRARMHGRTRVQQAARDAVGCADSFVRERPWCSVGTAAAVGIFIGALLSMRKS.

Residues Trp-87–Met-106 traverse the membrane as a helical segment.

This sequence belongs to the ElaB/YgaM/YqjD family. As to quaternary structure, may bind to ribosomes.

Its subcellular location is the cell inner membrane. This is an uncharacterized protein from Escherichia coli O157:H7.